We begin with the raw amino-acid sequence, 510 residues long: Proline--tRNA ligase (510 aa).

This sequence belongs to the class-II aminoacyl-tRNA synthetase family. ProS type 3 subfamily. As to quaternary structure, homodimer.

It localises to the cytoplasm. The enzyme catalyses tRNA(Pro) + L-proline + ATP = L-prolyl-tRNA(Pro) + AMP + diphosphate. Its function is as follows. Catalyzes the attachment of proline to tRNA(Pro) in a two-step reaction: proline is first activated by ATP to form Pro-AMP and then transferred to the acceptor end of tRNA(Pro). The polypeptide is Proline--tRNA ligase (Sphingomonas elodea).